A 622-amino-acid polypeptide reads, in one-letter code: uncharacterized protein (622 aa).

The N-terminal stretch at 1-20 (MKIKAVAIFLSLLMIISLFS) is a signal peptide.

This is an uncharacterized protein from Methanocaldococcus jannaschii (strain ATCC 43067 / DSM 2661 / JAL-1 / JCM 10045 / NBRC 100440) (Methanococcus jannaschii).